A 249-amino-acid polypeptide reads, in one-letter code: 5'-nucleotidase SurE (249 aa).

A divalent metal cation contacts are provided by Asp-8, Asp-9, Ser-39, and Asn-91.

Belongs to the SurE nucleotidase family. It depends on a divalent metal cation as a cofactor.

The protein localises to the cytoplasm. The enzyme catalyses a ribonucleoside 5'-phosphate + H2O = a ribonucleoside + phosphate. Nucleotidase that shows phosphatase activity on nucleoside 5'-monophosphates. The sequence is that of 5'-nucleotidase SurE from Pseudomonas fluorescens (strain Pf0-1).